The chain runs to 98 residues: Trp operon repressor homolog (98 aa).

A DNA-binding region spans residues 59–82 (QRQVSQMLGVGVATITRGSNELKA).

The protein belongs to the TrpR family. In terms of assembly, homodimer.

Its subcellular location is the cytoplasm. This protein is an aporepressor. When complexed with L-tryptophan it binds the operator region of the trp operon and prevents the initiation of transcription. The protein is Trp operon repressor homolog of Vibrio atlanticus (strain LGP32) (Vibrio splendidus (strain Mel32)).